Reading from the N-terminus, the 175-residue chain is Large ribosomal subunit protein uL10 (175 aa).

The protein belongs to the universal ribosomal protein uL10 family. Part of the ribosomal stalk of the 50S ribosomal subunit. The N-terminus interacts with L11 and the large rRNA to form the base of the stalk. The C-terminus forms an elongated spine to which L12 dimers bind in a sequential fashion forming a multimeric L10(L12)X complex.

Functionally, forms part of the ribosomal stalk, playing a central role in the interaction of the ribosome with GTP-bound translation factors. The protein is Large ribosomal subunit protein uL10 of Prochlorococcus marinus (strain MIT 9313).